We begin with the raw amino-acid sequence, 440 residues long: Acyltransferase Pun1 (440 aa).

Residues His-169 and Asp-384 each act as proton acceptor in the active site.

It belongs to the plant acyltransferase family.

It catalyses the reaction vanillylamine + (6E)-8-methylnon-6-enoyl-CoA = capsaicin + CoA + H(+). It carries out the reaction (6E)-8-methylnon-6-enoyl-CoA + 4-hydroxy-3-methoxy-benzenemethanol = capsiate + CoA. Its function is as follows. Involved in the biosynthesis of capsaicinoids and capsinoids natural products, pungent alkaloids synthesized from phenylpropanoid intermediates in the placental tissue of chili pepper fruit acting as repellant on herbivorous mammals and conferring spiciness to hot peppers. Catalyzes the biosynthesis of capsaicin, a pungent component, and of capsiate, a non-pungent component, from vanillylamine and vanillyl alcohol, respectively. Can transfer an acyl from 8-methylnon-6-enoyl-CoA to vanillylamine forming capsaicin and CoA. The sequence is that of Acyltransferase Pun1 from Capsicum frutescens (Cayenne pepper).